The primary structure comprises 775 residues: Phenylalanine--tRNA ligase beta subunit (775 aa).

A tRNA-binding domain is found at 39-147 (GIDLDGVVFG…EDFKPGTDAN (109 aa)). One can recognise a B5 domain in the interval 394–470 (YKPKKVFLPQ…RVKGYEHYTS (77 aa)). Mg(2+) contacts are provided by D448, D454, E457, and E458. Residues 681–774 (AKFPPVVRDI…LKEKYGVELR (94 aa)) enclose the FDX-ACB domain.

The protein belongs to the phenylalanyl-tRNA synthetase beta subunit family. Type 1 subfamily. As to quaternary structure, tetramer of two alpha and two beta subunits. It depends on Mg(2+) as a cofactor.

The protein resides in the cytoplasm. The catalysed reaction is tRNA(Phe) + L-phenylalanine + ATP = L-phenylalanyl-tRNA(Phe) + AMP + diphosphate + H(+). The polypeptide is Phenylalanine--tRNA ligase beta subunit (pheT) (Aquifex aeolicus (strain VF5)).